Here is a 447-residue protein sequence, read N- to C-terminus: Gustatory receptor family protein 3 (447 aa).

Topologically, residues 1 to 69 (MTITASNTLE…HTHSSARNTM (69 aa)) are extracellular. The helical transmembrane segment at 70–90 (FKWPLTIYNYLTLAILTAATI) threads the bilayer. Residues 91–116 (RRISQIKQKSATNEEKDAAFHVLNPT) lie on the Cytoplasmic side of the membrane. A helical transmembrane segment spans residues 117 to 137 (FVLTLCHALLMFSGLAAGFLL). Over 138–171 (LKLQKQREKMYHVLDQGLGRNRNEEHDSHHFKLN) the chain is Extracellular. A helical transmembrane segment spans residues 172–192 (KLFISISFSFAAALSFVQIAT). Residues 193 to 211 (KMRYLDLPDTPDLINRKIY) are Cytoplasmic-facing. The chain crosses the membrane as a helical span at residues 212-232 (FVILEGYVIFIASSCISLVAI). At 233-292 (LFFQLCRILQFSIGQLIEEMVPKEKEECPLPEQSLQQIHDVQIHYQEISNAKLYIEQNFS) the chain is on the extracellular side. Residues 293-313 (FSLFYTYGCCIPLTCLLGYIA) traverse the membrane as a helical segment. Residues 314–328 (FRNGIQADMAETFSV) lie on the Cytoplasmic side of the membrane. A helical membrane pass occupies residues 329–349 (AIWLTNTMLALMLFSIPAFMI). The Extracellular segment spans residues 350-405 (AEEGDKLLTASFKMYHETLCEERDLLVLSQMSFLSFQMHATKLTLTAGNFFMMNRK). Residues 406–426 (IMISLFSAIFTYFLILVQFDA) form a helical membrane-spanning segment. Topologically, residues 427–447 (EKERAGECNNQSRVLIVQPPV) are cytoplasmic.

Belongs to the insect chemoreceptor superfamily. Gustatory receptor (GR) family. As to expression, expressed in I2 pharyngeal neurons.

It localises to the membrane. Its function is as follows. Chemoreceptor involved in light-induced avoidance behavior. Probably acts as a molecular sensor in I2 pharyngeal neurons, required for the inhibition of feeding in response to light and hydrogen peroxide. Involved in circadian rhythms, probably by acting as a light sensor. In contrast to lite-1, does not act as a photoreceptor. The protein is Gustatory receptor family protein 3 of Caenorhabditis elegans.